A 502-amino-acid chain; its full sequence is ATP synthase subunit alpha (502 aa).

Residue 169 to 176 (GDRATGKT) coordinates ATP.

The protein belongs to the ATPase alpha/beta chains family. As to quaternary structure, F-type ATPases have 2 components, CF(1) - the catalytic core - and CF(0) - the membrane proton channel. CF(1) has five subunits: alpha(3), beta(3), gamma(1), delta(1), epsilon(1). CF(0) has three main subunits: a(1), b(2) and c(9-12). The alpha and beta chains form an alternating ring which encloses part of the gamma chain. CF(1) is attached to CF(0) by a central stalk formed by the gamma and epsilon chains, while a peripheral stalk is formed by the delta and b chains.

Its subcellular location is the cell inner membrane. The enzyme catalyses ATP + H2O + 4 H(+)(in) = ADP + phosphate + 5 H(+)(out). Produces ATP from ADP in the presence of a proton gradient across the membrane. The alpha chain is a regulatory subunit. The chain is ATP synthase subunit alpha from Hydrogenobaculum sp. (strain Y04AAS1).